The sequence spans 656 residues: uncharacterized protein (656 aa).

The tract at residues 623–656 (EIDIPGTPASIDPEWSRPPGSITDDHVFDAPLHR) is disordered. A compositionally biased stretch (basic and acidic residues) spans 645-656 (TDDHVFDAPLHR).

This is an uncharacterized protein from Mycobacterium tuberculosis (strain ATCC 25618 / H37Rv).